Consider the following 93-residue polypeptide: Precursor of CEP13 (93 aa).

An N-terminal signal peptide occupies residues 1 to 27; that stretch reads MARPRISISMICLLILIVGFVLQSSQA. Positions 28–78 are excised as a propeptide; it reads RKVLVPYGTSKGLFLSALPKGNVPPSGPSDKGHTSPPDDTDQRMVPENSPE. A disordered region spans residues 45 to 93; the sequence is LPKGNVPPSGPSDKGHTSPPDDTDQRMVPENSPEIYRRLESVPSPGVGH. A hydroxyproline mark is found at P87 and P89.

The protein belongs to the C-terminally encoded plant signaling peptide (CEP) family. Interacts with CEP receptors (e.g. CEPR1 and CEPR2). The mature small signaling peptide is generated by proteolytic processing of the longer precursor.

The protein resides in the secreted. Its subcellular location is the extracellular space. It localises to the apoplast. Functionally, extracellular signaling peptide that may regulate primary root growth rate and systemic nitrogen (N)-demand signaling. The sequence is that of Precursor of CEP13 from Arabidopsis thaliana (Mouse-ear cress).